We begin with the raw amino-acid sequence, 359 residues long: 4-hydroxyproline 2-epimerase (359 aa).

The active-site Proton acceptor is C126. Substrate is bound by residues 127 to 128, H248, and D274; that span reads GH. Catalysis depends on C278, which acts as the Proton donor. 279 to 280 provides a ligand contact to substrate; it reads GT.

This sequence belongs to the proline racemase family.

The enzyme catalyses trans-4-hydroxy-L-proline = cis-4-hydroxy-D-proline. Catalyzes the epimerization of trans-4-hydroxy-L-proline (t4LHyp) to cis-4-hydroxy-D-proline (c4DHyp). Is likely involved in a degradation pathway that converts t4LHyp to alpha-ketoglutarate. Displays no proline racemase activity. The sequence is that of 4-hydroxyproline 2-epimerase from Planctopirus limnophila (strain ATCC 43296 / DSM 3776 / IFAM 1008 / Mu 290) (Planctomyces limnophilus).